Here is a 213-residue protein sequence, read N- to C-terminus: Ras-related protein RabK1 (213 aa).

Residue 14–21 (GDRMVGKL) participates in GTP binding. The Effector region signature appears at 36-43 (GNSIPFDF). Residues 61–65 (NTHGS) and 119–122 (TKSD) each bind GTP.

This sequence belongs to the small GTPase superfamily. Rab family.

The polypeptide is Ras-related protein RabK1 (rabK1) (Dictyostelium discoideum (Social amoeba)).